The following is a 630-amino-acid chain: NUAK family SNF1-like kinase 2 (630 aa).

M1 is subject to N-acetylmethionine. The Protein kinase domain maps to 57 to 307 (YEFLETLGKG…LEDVASHWWV (251 aa)). ATP contacts are provided by residues 63–71 (LGKGTYGKV) and K85. D179 (proton acceptor) is an active-site residue. Residue T212 is modified to Phosphothreonine. Disordered stretches follow at residues 361 to 504 (HVPG…RLHR) and 521 to 566 (GTAP…LDLP). The segment covering 464 to 476 (SGYYSSPEPSESG) has biased composition (low complexity). Residues S529, S550, S553, and S579 each carry the phosphoserine modification.

The protein belongs to the protein kinase superfamily. CAMK Ser/Thr protein kinase family. SNF1 subfamily. The cofactor is Mg(2+). Post-translationally, phosphorylated at Thr-212 by STK11/LKB1 in complex with STE20-related adapter-alpha (STRADA) pseudo kinase and CAB39. Autophosphorylation is also possible at Thr-212. As to expression, expressed in liver, skin, testis, uterus, ovary, adrenal gland and brain (at protein level). Expressed in kidney, heart, skin, spleen, lung, uterus, liver and the exocrine and endocrine compartments of the human pancreas. A kinase-inactive isoform also appears to be expressed in the skin, spleen, lung, uterus, liver and testis.

The catalysed reaction is L-seryl-[protein] + ATP = O-phospho-L-seryl-[protein] + ADP + H(+). It carries out the reaction L-threonyl-[protein] + ATP = O-phospho-L-threonyl-[protein] + ADP + H(+). With respect to regulation, activated by phosphorylation on Thr-212 by STK11 in complex with STE20-related adapter-alpha (STRAD alpha) pseudo kinase and CAB39. Functionally, stress-activated kinase involved in tolerance to glucose starvation. Induces cell-cell detachment by increasing F-actin conversion to G-actin. Expression is induced by CD95 or TNF-alpha, via NF-kappa-B. Protects cells from CD95-mediated apoptosis and is required for the increased motility and invasiveness of CD95-activated tumor cells. Phosphorylates LATS1 and LATS2. Plays a key role in neural tube closure during embryonic development through LATS2 phosphorylation and regulation of the nuclear localization of YAP1 a critical downstream regulatory target in the Hippo signaling pathway. In Rattus norvegicus (Rat), this protein is NUAK family SNF1-like kinase 2.